A 160-amino-acid polypeptide reads, in one-letter code: Vegetative-specific protein V4 (160 aa).

3 consecutive repeat copies span residues 151 to 153, 154 to 156, and 157 to 159. The interval 151–159 is 3 X 3 AA tandem repeats of N-Q-[PG]; the sequence is NQPNQPNQG.

Unknown. Its expression during growth is not required for growth but for the proper initiation of development, therefore playing a role in the transition from growth to development. The polypeptide is Vegetative-specific protein V4 (lmcB) (Dictyostelium discoideum (Social amoeba)).